The primary structure comprises 301 residues: Putative dynamin-related protein 4A (301 aa).

The Dynamin-type G domain maps to 59–301; that stretch reads GIQLPTIVVV…LIDGDIVGIL (243 aa). The interval 69-76 is G1 motif; it reads GDQSSGKS. 69–76 is a binding site for GTP; sequence GDQSSGKS. The segment at 94–96 is G2 motif; the sequence is CTR. Residues 168 to 171 form a G3 motif region; sequence DLPG. GTP contacts are provided by residues 168–172 and 237–240; these read DLPGI and TKAD. Residues 237 to 240 form a G4 motif region; it reads TKAD. Residue glutamate 270 is a region of interest, G5 motif.

It belongs to the TRAFAC class dynamin-like GTPase superfamily. Dynamin/Fzo/YdjA family.

The chain is Putative dynamin-related protein 4A (DRP4A) from Arabidopsis thaliana (Mouse-ear cress).